A 379-amino-acid chain; its full sequence is Glucose-1-phosphate adenylyltransferase (379 aa).

Residues Gly164, 179–180 (EK), and Ser190 each bind alpha-D-glucose 1-phosphate.

Belongs to the bacterial/plant glucose-1-phosphate adenylyltransferase family. Homotetramer.

The enzyme catalyses alpha-D-glucose 1-phosphate + ATP + H(+) = ADP-alpha-D-glucose + diphosphate. It participates in glycan biosynthesis; glycogen biosynthesis. Functionally, involved in the biosynthesis of ADP-glucose, a building block required for the elongation reactions to produce glycogen. Catalyzes the reaction between ATP and alpha-D-glucose 1-phosphate (G1P) to produce pyrophosphate and ADP-Glc. The protein is Glucose-1-phosphate adenylyltransferase of Streptococcus equi subsp. zooepidemicus (strain H70).